A 185-amino-acid chain; its full sequence is Large ribosomal subunit protein uL5 (185 aa).

This sequence belongs to the universal ribosomal protein uL5 family. Part of the 50S ribosomal subunit; part of the 5S rRNA/L5/L18/L25 subcomplex. Contacts the 5S rRNA and the P site tRNA. Forms a bridge to the 30S subunit in the 70S ribosome.

Its function is as follows. This is one of the proteins that bind and probably mediate the attachment of the 5S RNA into the large ribosomal subunit, where it forms part of the central protuberance. In the 70S ribosome it contacts protein S13 of the 30S subunit (bridge B1b), connecting the 2 subunits; this bridge is implicated in subunit movement. Contacts the P site tRNA; the 5S rRNA and some of its associated proteins might help stabilize positioning of ribosome-bound tRNAs. This chain is Large ribosomal subunit protein uL5, found in Magnetococcus marinus (strain ATCC BAA-1437 / JCM 17883 / MC-1).